Consider the following 560-residue polypeptide: Choline/ethanolamine transporter FLVCR1 (560 aa).

The disordered stretch occupies residues 1 to 43; that stretch reads MARPDDEVGPAVAPGHPLGKGYLPVPKGAPDGEARLVPQNGPE. The Cytoplasmic segment spans residues 1 to 92; it reads MARPDDEVGP…EDVPCPACPP (92 aa). A helical membrane pass occupies residues 93 to 117; the sequence is RTALSPRRFVVLLIFSLYSLVNAFQ. Residues 118–135 are Extracellular-facing; it reads WIQYSSISNVFEDFYEVS. The helical transmembrane segment at 136 to 163 threads the bilayer; the sequence is PLHINWLSMVYMVAYVPLIFPATWLLDT. Residues 164–165 are Cytoplasmic-facing; sequence RG. A helical membrane pass occupies residues 166 to 185; that stretch reads LRLTALLGSGLNCLGAWVKC. The Extracellular segment spans residues 186–192; the sequence is GSVQRHL. Residues 193 to 221 traverse the membrane as a helical segment; sequence FWVTMLGQILCSVAQVFILGLPSPVASVW. Q207 serves as a coordination point for ethanolamine. Residues 222 to 226 are Cytoplasmic-facing; that stretch reads FGPKE. Residues 227 to 252 form a helical membrane-spanning segment; that stretch reads VSTACATAVLGNQLGTAVGFLLPPVL. The Extracellular portion of the chain corresponds to 253–270; it reads VPALGTQNNTGLLAHTQN. N270 carries an N-linked (GlcNAc...) asparagine glycan. Residues 271 to 300 traverse the membrane as a helical segment; sequence NTDLLAHNINTMFYGTAFISTFLFFLTVIA. Residues 301-336 lie on the Cytoplasmic side of the membrane; that stretch reads FKEKPPLPPSQAQAILRDSPPEEYSYKSSIWNLCRN. A helical transmembrane segment spans residues 337 to 367; it reads IPFVLLLVSYGIMTGAFYSISTLLNQIILTY. The Extracellular portion of the chain corresponds to 368-371; it reads YVGE. The chain crosses the membrane as a helical span at residues 372–400; sequence EVNAGRIGLTLVVAGMVGSILCGLWLDYT. The Cytoplasmic segment spans residues 401–402; that stretch reads KT. A helical membrane pass occupies residues 403-425; it reads YKQTTLIVYVLSFIGMLIFTFTL. The Extracellular segment spans residues 426-428; that stretch reads NLG. A helical transmembrane segment spans residues 429–458; that stretch reads YIVALFFTGGILGFFMTGYLPLGFEFAVEI. The Cytoplasmic portion of the chain corresponds to 459–466; it reads TYPESEGM. The chain crosses the membrane as a helical span at residues 467–492; the sequence is SSGLLNTAAQILGIFFTLAQGKITTD. Q476 is a binding site for ethanolamine. Q476 lines the choline pocket. Residues 493 to 495 are Extracellular-facing; the sequence is YNS. Residues 496 to 518 form a helical membrane-spanning segment; sequence PEAGNIFLCAWMFVGIILTALIK. Residues 519 to 560 are Cytoplasmic-facing; sequence SDLRRHNINTGLTNIDVKAVPVDSRVDPKPKAMVSIQSESSL. S542 carries the phosphoserine modification.

Belongs to the major facilitator superfamily. Feline leukemia virus subgroup C receptor (TC 2.A.1.28.1) family.

It localises to the cell membrane. It catalyses the reaction choline(out) = choline(in). The enzyme catalyses ethanolamine(in) = ethanolamine(out). It carries out the reaction heme b(in) = heme b(out). Functionally, uniporter that mediates the transport of extracellular choline and ethanolamine into cells, thereby playing a key role in phospholipid biosynthesis. Choline and ethanolamine are the precursors of phosphatidylcholine and phosphatidylethanolamine, respectively, the two most abundant phospholipids. Transport is not coupled with proton transport and is exclusively driven by the choline (or ethanolamine) gradient across the plasma membrane. Also acts as a heme b transporter that mediates heme efflux from the cytoplasm to the extracellular compartment. This is Choline/ethanolamine transporter FLVCR1 (Flvcr1) from Mus terricolor (Earth-colored mouse).